A 346-amino-acid chain; its full sequence is Serpentine receptor class beta-11 (346 aa).

Transmembrane regions (helical) follow at residues 26 to 46, 57 to 77, 102 to 122, 139 to 159, 186 to 206, 239 to 259, and 278 to 298; these read YQMI…LFKL, TIFI…LTTS, IWNF…CSVT, SVVM…CIIF, FTFF…DLIL, VFLI…VVFF, and TFST…SSFF.

This sequence belongs to the nematode receptor-like protein srb family.

The protein resides in the membrane. The polypeptide is Serpentine receptor class beta-11 (srb-11) (Caenorhabditis elegans).